Reading from the N-terminus, the 626-residue chain is Threonine--tRNA ligase (626 aa).

The tract at residues 1-145 (MRMLLIHSDY…SRTIVPEKAV (145 aa)) is editing domain. The interval 207-506 (PHVRLMLEQE…QEKGIKPMYP (300 aa)) is catalytic. Zn(2+) is bound by residues Cys-299, His-351, and His-475.

This sequence belongs to the class-II aminoacyl-tRNA synthetase family. As to quaternary structure, homodimer. Zn(2+) is required as a cofactor.

The protein resides in the cytoplasm. The catalysed reaction is tRNA(Thr) + L-threonine + ATP = L-threonyl-tRNA(Thr) + AMP + diphosphate + H(+). Functionally, catalyzes the attachment of threonine to tRNA(Thr) in a two-step reaction: L-threonine is first activated by ATP to form Thr-AMP and then transferred to the acceptor end of tRNA(Thr). Also edits incorrectly charged L-seryl-tRNA(Thr). The sequence is that of Threonine--tRNA ligase from Thermococcus kodakarensis (strain ATCC BAA-918 / JCM 12380 / KOD1) (Pyrococcus kodakaraensis (strain KOD1)).